The following is a 97-amino-acid chain: Co-chaperonin GroES (97 aa).

This sequence belongs to the GroES chaperonin family. Heptamer of 7 subunits arranged in a ring. Interacts with the chaperonin GroEL.

The protein resides in the cytoplasm. Its function is as follows. Together with the chaperonin GroEL, plays an essential role in assisting protein folding. The GroEL-GroES system forms a nano-cage that allows encapsulation of the non-native substrate proteins and provides a physical environment optimized to promote and accelerate protein folding. GroES binds to the apical surface of the GroEL ring, thereby capping the opening of the GroEL channel. The protein is Co-chaperonin GroES of Pectobacterium carotovorum subsp. carotovorum (strain PC1).